Reading from the N-terminus, the 178-residue chain is Bifunctional protein PyrR (178 aa).

The PRPP-binding signature appears at Val99 to Thr111.

This sequence belongs to the purine/pyrimidine phosphoribosyltransferase family. PyrR subfamily. In terms of assembly, homodimer and homohexamer; in equilibrium.

It catalyses the reaction UMP + diphosphate = 5-phospho-alpha-D-ribose 1-diphosphate + uracil. Functionally, regulates transcriptional attenuation of the pyrimidine nucleotide (pyr) operon by binding in a uridine-dependent manner to specific sites on pyr mRNA. This disrupts an antiterminator hairpin in the RNA and favors formation of a downstream transcription terminator, leading to a reduced expression of downstream genes. Also displays a weak uracil phosphoribosyltransferase activity which is not physiologically significant. This is Bifunctional protein PyrR from Clostridium perfringens (strain ATCC 13124 / DSM 756 / JCM 1290 / NCIMB 6125 / NCTC 8237 / Type A).